The primary structure comprises 221 residues: Ribosomal RNA small subunit methyltransferase Nep1 (221 aa).

S-adenosyl-L-methionine contacts are provided by residues G174, G179, and 196-201; that span reads VGDEPL.

It belongs to the class IV-like SAM-binding methyltransferase superfamily. RNA methyltransferase NEP1 family. As to quaternary structure, homodimer.

It catalyses the reaction a pseudouridine in rRNA + S-adenosyl-L-methionine = an N(1)-methylpseudouridine in rRNA + S-adenosyl-L-homocysteine + H(+). Functionally, methyltransferase involved in ribosomal biogenesis. Specifically catalyzes the N1-methylation of the pseudouridine corresponding to position 914 in M.jannaschii 16S rRNA. The chain is Ribosomal RNA small subunit methyltransferase Nep1 from Pyrobaculum neutrophilum (strain DSM 2338 / JCM 9278 / NBRC 100436 / V24Sta) (Thermoproteus neutrophilus).